A 119-amino-acid chain; its full sequence is Small polypeptide DEVIL 24 (119 aa).

Positions 83 to 114 (SFTSKCTSLMKQQHARLCIIRLCATMLLRSYT) are required for DVL/RTFL small polypeptide activity. The chain crosses the membrane as a helical span at residues 96–113 (HARLCIIRLCATMLLRSY).

This sequence belongs to the DVL/RTFL small polypeptides family.

Its subcellular location is the cell membrane. In terms of biological role, small polypeptide acting as a regulatory molecule which coordinates cellular responses required for differentiation, growth and development, probably by restricting polar cell proliferation in lateral organs and coordinating socket cell recruitment and differentiation at trichome sites. The protein is Small polypeptide DEVIL 24 of Arabidopsis thaliana (Mouse-ear cress).